The sequence spans 342 residues: N-acetyl-gamma-glutamyl-phosphate reductase (342 aa).

Cysteine 149 is a catalytic residue.

Belongs to the NAGSA dehydrogenase family. Type 1 subfamily.

The protein localises to the cytoplasm. It catalyses the reaction N-acetyl-L-glutamate 5-semialdehyde + phosphate + NADP(+) = N-acetyl-L-glutamyl 5-phosphate + NADPH + H(+). It functions in the pathway amino-acid biosynthesis; L-arginine biosynthesis; N(2)-acetyl-L-ornithine from L-glutamate: step 3/4. In terms of biological role, catalyzes the NADPH-dependent reduction of N-acetyl-5-glutamyl phosphate to yield N-acetyl-L-glutamate 5-semialdehyde. The protein is N-acetyl-gamma-glutamyl-phosphate reductase of Nitrosospira multiformis (strain ATCC 25196 / NCIMB 11849 / C 71).